The chain runs to 66 residues: Potassium channel toxin alpha-KTx (66 aa).

The N-terminal stretch at 1-21 is a signal peptide; the sequence is MNTKVVLIMLMITSVILVVEA. 4 cysteine pairs are disulfide-bonded: Cys29–Cys49, Cys35–Cys59, Cys39–Cys61, and Cys44–Cys64.

The protein belongs to the short scorpion toxin superfamily. Potassium channel inhibitor family. In terms of tissue distribution, expressed by the venom gland.

The protein localises to the secreted. Its function is as follows. Blocks voltage-gated potassium channels. The chain is Potassium channel toxin alpha-KTx from Hoffmannihadrurus gertschi (Scorpion).